The chain runs to 192 residues: GTP cyclohydrolase 1 (192 aa).

Positions 81, 84, and 153 each coordinate Zn(2+).

It belongs to the GTP cyclohydrolase I family. In terms of assembly, toroid-shaped homodecamer, composed of two pentamers of five dimers.

The catalysed reaction is GTP + H2O = 7,8-dihydroneopterin 3'-triphosphate + formate + H(+). The protein operates within cofactor biosynthesis; 7,8-dihydroneopterin triphosphate biosynthesis; 7,8-dihydroneopterin triphosphate from GTP: step 1/1. This chain is GTP cyclohydrolase 1, found in Streptococcus mutans serotype c (strain ATCC 700610 / UA159).